A 1456-amino-acid polypeptide reads, in one-letter code: Macrophage mannose receptor 1 (1456 aa).

Positions 1-19 are cleaved as a signal peptide; the sequence is MRLLLLLAFISVIPVSVQL. At 20 to 1388 the chain is on the extracellular side; that stretch reads LDARQFLIYN…DPQPKGSSKA (1369 aa). Residues 22-142 form the Ricin B-type lectin domain; that stretch reads ARQFLIYNED…SGLWSRWKVY (121 aa). Disulfide bonds link Cys-35/Cys-49, Cys-74/Cys-91, Cys-102/Cys-149, Cys-168/Cys-194, Cys-182/Cys-209, Cys-247/Cys-340, and Cys-316/Cys-332. N-linked (GlcNAc...) asparagine glycosylation is present at Asn-104. Residues 163–211 enclose the Fibronectin type-II domain; that stretch reads ANGAVCAFPFKFENKWYADCTSAGRSDGWLWCGTTTDYDKDKLFGFCPL. The region spanning 225 to 341 is the C-type lectin 1 domain; sequence LTGILYQINS…CVQKLGYICK (117 aa). Asn-344 carries N-linked (GlcNAc...) asparagine glycosylation. C-type lectin domains lie at 369–487, 511–626, 655–778, and 807–923; these read YAGH…YICK, HGFY…FVCK, KTSM…WICQ, and YKDY…FICQ. 2 disulfides stabilise this stretch: Cys-391/Cys-486 and Cys-463/Cys-478. The N-linked (GlcNAc...) asparagine glycan is linked to Asn-529. Cystine bridges form between Cys-532-Cys-625, Cys-600-Cys-617, Cys-680-Cys-777, Cys-753-Cys-769, Cys-828-Cys-922, and Cys-899-Cys-914. N-linked (GlcNAc...) asparagine glycans are attached at residues Asn-926 and Asn-930. C-type lectin domains are found at residues 951–1079, 1101–1212, and 1240–1355; these read YKNK…YICQ, YGKS…FLCK, and FYGH…FICK. 6 disulfide bridges follow: Cys-976–Cys-1078, Cys-1051–Cys-1070, Cys-1122–Cys-1211, Cys-1189–Cys-1203, Cys-1262–Cys-1354, and Cys-1331–Cys-1346. Asn-1159 is a glycosylation site (N-linked (GlcNAc...) asparagine). N-linked (GlcNAc...) asparagine glycosylation is present at Asn-1204. Residues 1389–1409 traverse the membrane as a helical segment; the sequence is AGVVTVVLLIVIGAGVAAYFF. The Cytoplasmic segment spans residues 1410-1456; it reads YKKRHALHIPQEATFENTLYFNSNLSPGTSDTKDLMGNIEQNEHAII.

In terms of tissue distribution, detected in macrophages.

The protein localises to the endosome membrane. Its subcellular location is the cell membrane. In terms of biological role, mediates the endocytosis of glycoproteins by macrophages. Binds both sulfated and non-sulfated polysaccharide chains. Acts as phagocytic receptor for bacteria, fungi and other pathogens. The sequence is that of Macrophage mannose receptor 1 (Mrc1) from Mus musculus (Mouse).